Here is a 1153-residue protein sequence, read N- to C-terminus: uncharacterized protein (1153 aa).

An N-terminal signal peptide occupies residues 1–18 (MNKNIFITLLISLLLLSG). C19 carries N-palmitoyl cysteine lipidation. The S-diacylglycerol cysteine moiety is linked to residue C19. 4 helical membrane-spanning segments follow: residues 289–309 (VSAILTLYIMFTGFSFLIGNI), 393–413 (LGFIYIILYLIALYFIFFLIF), 422–442 (ALITIGMIIIMGPIFICFMLF), and 457–477 (ISYALQPIILFTGIAFISMII).

The protein belongs to the TrbL/VirB6 family.

The protein resides in the cell membrane. This is an uncharacterized protein from Rickettsia conorii (strain ATCC VR-613 / Malish 7).